Here is a 215-residue protein sequence, read N- to C-terminus: Probable transaldolase (215 aa).

The active-site Schiff-base intermediate with substrate is Lys83.

This sequence belongs to the transaldolase family. Type 3B subfamily.

The protein resides in the cytoplasm. The enzyme catalyses D-sedoheptulose 7-phosphate + D-glyceraldehyde 3-phosphate = D-erythrose 4-phosphate + beta-D-fructose 6-phosphate. Its pathway is carbohydrate degradation; pentose phosphate pathway; D-glyceraldehyde 3-phosphate and beta-D-fructose 6-phosphate from D-ribose 5-phosphate and D-xylulose 5-phosphate (non-oxidative stage): step 2/3. In terms of biological role, transaldolase is important for the balance of metabolites in the pentose-phosphate pathway. The polypeptide is Probable transaldolase (Desulforapulum autotrophicum (strain ATCC 43914 / DSM 3382 / VKM B-1955 / HRM2) (Desulfobacterium autotrophicum)).